A 469-amino-acid polypeptide reads, in one-letter code: ATP synthase subunit beta (469 aa).

156–163 (GGAGVGKT) serves as a coordination point for ATP.

Belongs to the ATPase alpha/beta chains family. In terms of assembly, F-type ATPases have 2 components, CF(1) - the catalytic core - and CF(0) - the membrane proton channel. CF(1) has five subunits: alpha(3), beta(3), gamma(1), delta(1), epsilon(1). CF(0) has three main subunits: a(1), b(2) and c(9-12). The alpha and beta chains form an alternating ring which encloses part of the gamma chain. CF(1) is attached to CF(0) by a central stalk formed by the gamma and epsilon chains, while a peripheral stalk is formed by the delta and b chains.

It is found in the cell membrane. It carries out the reaction ATP + H2O + 4 H(+)(in) = ADP + phosphate + 5 H(+)(out). Produces ATP from ADP in the presence of a proton gradient across the membrane. The catalytic sites are hosted primarily by the beta subunits. The chain is ATP synthase subunit beta from Lactococcus lactis subsp. cremoris (strain MG1363).